The primary structure comprises 336 residues: Putative ALA-interacting subunit 4 (336 aa).

The helical transmembrane segment at 36–56 threads the bilayer; that stretch reads VILTFLVSGVVFIPLGVICLF. Residue asparagine 94 is glycosylated (N-linked (GlcNAc...) asparagine). Residues 127–142 are compositionally biased toward basic and acidic residues; it reads RQDGQLRSPKDEHETK. The tract at residues 127-148 is disordered; it reads RQDGQLRSPKDEHETKSCAPED. N-linked (GlcNAc...) asparagine glycosylation occurs at asparagine 167. A helical membrane pass occupies residues 290–310; it reads FLGIAYLTVGSICLFLAVSFS. Asparagine 329 is a glycosylation site (N-linked (GlcNAc...) asparagine).

Belongs to the CDC50/LEM3 family. In terms of tissue distribution, expressed in flowers. May be restricted to pollen grains.

It localises to the membrane. This is Putative ALA-interacting subunit 4 (ALIS4) from Arabidopsis thaliana (Mouse-ear cress).